The sequence spans 347 residues: P2Y purinoceptor 12 (347 aa).

At 1 to 33 (MDVPGVNTTSANTTFSPGTSTLCVRDYKITQVL) the chain is on the extracellular side. N7 and N12 each carry an N-linked (GlcNAc...) asparagine glycan. 2 disulfide bridges follow: C23/C276 and C103/C181. A helical transmembrane segment spans residues 34-56 (FPLLYTVLFFAGLITNSLAMRIF). Residues 57–67 (FQIRSKSNFII) lie on the Cytoplasmic side of the membrane. 2 positions are modified to phosphoserine: S61 and S63. The chain crosses the membrane as a helical span at residues 68–88 (FLKNTVISDLLMILTFPFKIL). The Extracellular portion of the chain corresponds to 89 to 103 (SDAKLGAGPLRTLVC). Residues R99, C103, and Y111 each contribute to the ADP site. A helical membrane pass occupies residues 104 to 124 (QVTSVTFYFTMYISISFLGLI). At 125–148 (TIDRYLKTTRPFKTSSPSNLLGAK) the chain is on the cytoplasmic side. A helical membrane pass occupies residues 149–168 (ILSVVIWAFMFLISLPNMIL). ADP-binding positions include 162–165 (SLPN), 181–185 (CSFLK), H193, and N197. The Extracellular segment spans residues 169 to 191 (TNRRPKDKDVTKCSFLKSEFGLV). A helical membrane pass occupies residues 192–213 (WHEIVNYICQVIFWINFLIVIV). Topologically, residues 214 to 239 (CYSLITKELYRSYVRTRGSAKVPKKK) are cytoplasmic. A helical transmembrane segment spans residues 240-265 (VNVKVFIIIAVFFICFVPFHFARIPY). Residues 262-265 (RIPY), Q269, and K286 contribute to the ADP site. Topologically, residues 266–284 (TLSQTRAVFDCSAENTLFY) are extracellular. Residues 285 to 304 (VKESTLWLTSLNACLDPFIY) traverse the membrane as a helical segment. The Cytoplasmic portion of the chain corresponds to 305 to 347 (FFLCKSFRNSLTSMLRCSNSTSTSGTNKKKGQEGGEPSEETPM). The disordered stretch occupies residues 321–347 (CSNSTSTSGTNKKKGQEGGEPSEETPM).

It belongs to the G-protein coupled receptor 1 family.

It localises to the cell membrane. In terms of biological role, receptor for ADP and ATP coupled to G-proteins that inhibit the adenylyl cyclase second messenger system. Required for normal platelet aggregation and blood coagulation. This is P2Y purinoceptor 12 (P2ry12) from Mus musculus (Mouse).